The chain runs to 502 residues: mRNA cap guanine-N(7) methyltransferase (502 aa).

The tract at residues 1–118 (MADENPQAQG…SQQEEAMRFS (118 aa)) is disordered. The span at 93–115 (LVDRETLRRRQEERERSQQEEAM) shows a compositional bias: basic and acidic residues. One can recognise an mRNA cap 0 methyltransferase domain in the interval 146–502 (SKIKGLRSFN…FYHAFCFYKV (357 aa)). 155–156 (NN) serves as a coordination point for mRNA. Residues Lys159, Gly202, Asp226, Asp264, 307–309 (MFT), and Tyr312 each bind S-adenosyl-L-methionine. Positions 360–369 (ERETAAKKEE) are enriched in basic and acidic residues. The segment at 360-381 (ERETAAKKEEAEPEDGEVEEDD) is disordered. The segment covering 370-381 (AEPEDGEVEEDD) has biased composition (acidic residues).

The protein belongs to the class I-like SAM-binding methyltransferase superfamily. mRNA cap 0 methyltransferase family.

Its subcellular location is the nucleus. It catalyses the reaction a 5'-end (5'-triphosphoguanosine)-ribonucleoside in mRNA + S-adenosyl-L-methionine = a 5'-end (N(7)-methyl 5'-triphosphoguanosine)-ribonucleoside in mRNA + S-adenosyl-L-homocysteine. In terms of biological role, responsible for methylating the 5'-cap structure of mRNAs. The sequence is that of mRNA cap guanine-N(7) methyltransferase (abd1) from Aspergillus oryzae (strain ATCC 42149 / RIB 40) (Yellow koji mold).